Consider the following 148-residue polypeptide: Early glycoprotein GP48 (148 aa).

An N-terminal signal peptide occupies residues M1–A21. Residues N22, N44, N49, N57, N65, N104, N108, N118, N135, and N144 are each glycosylated (N-linked (GlcNAc...) asparagine; by host).

The protein belongs to the RL11 family. In terms of processing, N-glycosylated and possibly O-glycosylated.

The protein resides in the virion membrane. This Homo sapiens (Human) protein is Early glycoprotein GP48 (UL4).